A 110-amino-acid polypeptide reads, in one-letter code: Large ribosomal subunit protein uL22 (110 aa).

It belongs to the universal ribosomal protein uL22 family. Part of the 50S ribosomal subunit.

Functionally, this protein binds specifically to 23S rRNA; its binding is stimulated by other ribosomal proteins, e.g. L4, L17, and L20. It is important during the early stages of 50S assembly. It makes multiple contacts with different domains of the 23S rRNA in the assembled 50S subunit and ribosome. Its function is as follows. The globular domain of the protein is located near the polypeptide exit tunnel on the outside of the subunit, while an extended beta-hairpin is found that lines the wall of the exit tunnel in the center of the 70S ribosome. This chain is Large ribosomal subunit protein uL22, found in Mannheimia succiniciproducens (strain KCTC 0769BP / MBEL55E).